Reading from the N-terminus, the 504-residue chain is Probable GTP-binding protein OBGC2 (504 aa).

The segment covering 24–39 (AHRDARPALRLPELHA) has biased composition (basic and acidic residues). Disordered stretches follow at residues 24 to 46 (AHRDARPALRLPELHATRRRRNN) and 93 to 122 (VLAMPASPSTDAPKSPRRRSDKGKRSGVKK). In terms of domain architecture, Obg spans 73–276 (HKYFDHAVVT…VSLELILRVV (204 aa)). Residues 107–122 (SPRRRSDKGKRSGVKK) show a composition bias toward basic residues. Residues 277-494 (ADVGLVGLPN…MLKEIRAALR (218 aa)) form the OBG-type G domain. GTP-binding positions include 283-290 (GLPNAGKS) and 337-341 (DLPGL). Polar residues predominate over residues 436–452 (SEDSLNGNTGEHNTSSE). Residues 436 to 463 (SEDSLNGNTGEHNTSSETKVEGGEKELR) are disordered. A compositionally biased stretch (basic and acidic residues) spans 453-463 (TKVEGGEKELR).

The protein belongs to the TRAFAC class OBG-HflX-like GTPase superfamily. OBG GTPase family.

In terms of biological role, may bind GTP and have GTPase activity. This is Probable GTP-binding protein OBGC2 from Oryza sativa subsp. japonica (Rice).